A 279-amino-acid chain; its full sequence is NAD kinase (279 aa).

The active-site Proton acceptor is the Asp-61. NAD(+)-binding positions include 61-62 (DG), 138-139 (ND), Lys-149, Lys-166, Asp-168, and 179-184 (TGYSFS).

This sequence belongs to the NAD kinase family. The cofactor is a divalent metal cation.

Its subcellular location is the cytoplasm. It carries out the reaction NAD(+) + ATP = ADP + NADP(+) + H(+). Functionally, involved in the regulation of the intracellular balance of NAD and NADP, and is a key enzyme in the biosynthesis of NADP. Catalyzes specifically the phosphorylation on 2'-hydroxyl of the adenosine moiety of NAD to yield NADP. The chain is NAD kinase from Borrelia garinii subsp. bavariensis (strain ATCC BAA-2496 / DSM 23469 / PBi) (Borreliella bavariensis).